A 320-amino-acid chain; its full sequence is Putative S-adenosyl-L-methionine-dependent methyltransferase MAP_4078 (320 aa).

S-adenosyl-L-methionine is bound by residues D132 and 161-162 (DL). Residues 294 to 320 (PPHDIEDAIPQTRFVAAQRTERTRPDR) are disordered.

This sequence belongs to the UPF0677 family.

Functionally, exhibits S-adenosyl-L-methionine-dependent methyltransferase activity. This is Putative S-adenosyl-L-methionine-dependent methyltransferase MAP_4078 from Mycolicibacterium paratuberculosis (strain ATCC BAA-968 / K-10) (Mycobacterium paratuberculosis).